A 119-amino-acid chain; its full sequence is Large ribosomal subunit protein bL20 (119 aa).

The protein belongs to the bacterial ribosomal protein bL20 family.

In terms of biological role, binds directly to 23S ribosomal RNA and is necessary for the in vitro assembly process of the 50S ribosomal subunit. It is not involved in the protein synthesizing functions of that subunit. The polypeptide is Large ribosomal subunit protein bL20 (Rhodopseudomonas palustris (strain HaA2)).